A 130-amino-acid chain; its full sequence is Small ribosomal subunit protein uS8B (130 aa).

It belongs to the universal ribosomal protein uS8 family.

The protein is Small ribosomal subunit protein uS8B (RpS15Ab) of Drosophila melanogaster (Fruit fly).